The chain runs to 461 residues: MRWEFLPCLLLLISNNKIFGFKVPSINFEMLKDEGFEVSIPDEPGIQRVFYMFQIDDTCPALMDYITEAVNGSWVSKQKMSLQNNDKLQISMLVQFNEEIFEKSETRVIINTRLLTTKDSSSRGITFLTGEGECQAYLAPAQQAKRCKAAQTIVSNGRHTCQGELIFEDNFSEAQLNKTTWKHDIRQRMYHVEEELVAFDDAARNCFVKEGELHIVPTIATEVTDGSFKLGDRCTAVESPEQECNIAHGIFYSIKPPVFSAQIHTRNSFSFKFGKIVVRAKLPKGDWLFPYLMLQPVSTYAETHYAKQLRIAYARGNANLRTKQGDDISGNHLYGGGVVWHHGNAVQFLKDKISNSHYGDDFHNYTMIWQRDKITLMVDDEVYGELYDGLPFFNEKCFIIFGVTVGGFLNFDDSLLAKDVKPYKNREPRAALSFWQHRDAWAPTWGRHSAMVIDYVRVYAE.

Positions 1 to 20 (MRWEFLPCLLLLISNNKIFG) are cleaved as a signal peptide. One can recognise a CBM39 domain in the interval 21–115 (FKVPSINFEM…TRVIINTRLL (95 aa)). N-linked (GlcNAc...) asparagine glycosylation is found at Asn-71, Asn-170, Asn-177, and Asn-364. The GH16 domain occupies 179 to 461 (TTWKHDIRQR…VIDYVRVYAE (283 aa)).

The protein belongs to the insect beta-1,3-glucan binding protein family.

The protein resides in the secreted. Involved in the recognition of invading microorganisms. Binds specifically to beta-1,3-glucan and activates the phenoloxidase cascade. This is Gram-negative bacteria-binding protein 2 from Drosophila melanogaster (Fruit fly).